Here is a 172-residue protein sequence, read N- to C-terminus: MTINLTDLIRNVPDFPVPGIQFKDITPLLQHGAAFKQVIDTLAARYEGRSLDAVVGVESRGFIFSAPLAYRLGIGLVPIRKPGKLPWETFAVEYDLEYGSNKLEMHRDALDPGARVVVIDDVLATGGTVAAACQLVETAGAVVEEVACLIELTLLKGRERLANYSFFSMLQY.

Belongs to the purine/pyrimidine phosphoribosyltransferase family. In terms of assembly, homodimer.

It localises to the cytoplasm. The catalysed reaction is AMP + diphosphate = 5-phospho-alpha-D-ribose 1-diphosphate + adenine. It participates in purine metabolism; AMP biosynthesis via salvage pathway; AMP from adenine: step 1/1. In terms of biological role, catalyzes a salvage reaction resulting in the formation of AMP, that is energically less costly than de novo synthesis. This is Adenine phosphoribosyltransferase from Roseiflexus castenholzii (strain DSM 13941 / HLO8).